A 336-amino-acid chain; its full sequence is Izumo sperm-egg fusion protein 1 (336 aa).

An N-terminal signal peptide occupies residues methionine 1 to serine 16. One can recognise an Ig-like C2-type domain in the interval proline 158–serine 247. Cysteines 179 and 236 form a disulfide. A helical transmembrane segment spans residues serine 287 to isoleucine 307.

The protein belongs to the Izumo family. In terms of assembly, forms a complex with tmem81 and spaca6 on spermatocyte cell membrane. The complex binds to oocyte protein bncr. As to expression, expressed in sperm.

The protein resides in the cell membrane. It localises to the cytoplasmic vesicle. The protein localises to the secretory vesicle. It is found in the acrosome membrane. Functionally, essential sperm cell-surface protein required for fertilization by acting as a ligand for bncr receptor on egg. The interaction of the complex izumo1:spaca6:tmemt81 with bncr is a necessary adhesion event between sperm and egg that is required for fertilization. The polypeptide is Izumo sperm-egg fusion protein 1 (Danio rerio (Zebrafish)).